Here is a 190-residue protein sequence, read N- to C-terminus: Dual-action ribosomal maturation protein DarP (190 aa).

The interval 1–31 (MIHADHDDNLPDDEEGLPLPPSKSQRKRDMH) is disordered.

Belongs to the DarP family.

Its subcellular location is the cytoplasm. Member of a network of 50S ribosomal subunit biogenesis factors which assembles along the 30S-50S interface, preventing incorrect 23S rRNA structures from forming. Promotes peptidyl transferase center (PTC) maturation. This Aromatoleum aromaticum (strain DSM 19018 / LMG 30748 / EbN1) (Azoarcus sp. (strain EbN1)) protein is Dual-action ribosomal maturation protein DarP.